A 165-amino-acid polypeptide reads, in one-letter code: Phosphopantetheine adenylyltransferase (165 aa).

Residue Thr9 coordinates substrate. Residues 9–10 (TF) and His17 each bind ATP. Residues Lys41, Leu78, and Arg92 each contribute to the substrate site. Residues 93–95 (GLR), Glu103, and 128–134 (RQAIASK) contribute to the ATP site.

It belongs to the bacterial CoaD family. As to quaternary structure, homohexamer. Requires Mg(2+) as cofactor.

It localises to the cytoplasm. It catalyses the reaction (R)-4'-phosphopantetheine + ATP + H(+) = 3'-dephospho-CoA + diphosphate. It participates in cofactor biosynthesis; coenzyme A biosynthesis; CoA from (R)-pantothenate: step 4/5. Functionally, reversibly transfers an adenylyl group from ATP to 4'-phosphopantetheine, yielding dephospho-CoA (dPCoA) and pyrophosphate. The protein is Phosphopantetheine adenylyltransferase of Ruegeria pomeroyi (strain ATCC 700808 / DSM 15171 / DSS-3) (Silicibacter pomeroyi).